Consider the following 339-residue polypeptide: Phosphoribosylformylglycinamidine cyclo-ligase (339 aa).

It belongs to the AIR synthase family.

The protein resides in the cytoplasm. The enzyme catalyses 2-formamido-N(1)-(5-O-phospho-beta-D-ribosyl)acetamidine + ATP = 5-amino-1-(5-phospho-beta-D-ribosyl)imidazole + ADP + phosphate + H(+). The protein operates within purine metabolism; IMP biosynthesis via de novo pathway; 5-amino-1-(5-phospho-D-ribosyl)imidazole from N(2)-formyl-N(1)-(5-phospho-D-ribosyl)glycinamide: step 2/2. In Streptococcus thermophilus (strain ATCC BAA-250 / LMG 18311), this protein is Phosphoribosylformylglycinamidine cyclo-ligase.